Reading from the N-terminus, the 358-residue chain is Peptide chain release factor 1 (358 aa).

Gln-233 carries the N5-methylglutamine modification.

This sequence belongs to the prokaryotic/mitochondrial release factor family. Methylated by PrmC. Methylation increases the termination efficiency of RF1.

Its subcellular location is the cytoplasm. Functionally, peptide chain release factor 1 directs the termination of translation in response to the peptide chain termination codons UAG and UAA. The polypeptide is Peptide chain release factor 1 (Staphylococcus aureus (strain MRSA252)).